Reading from the N-terminus, the 397-residue chain is CCA-adding enzyme (397 aa).

ATP is bound by residues Gly26 and Arg29. CTP-binding residues include Gly26 and Arg29. 2 residues coordinate Mg(2+): Asp39 and Asp41. Residues Arg110, Asp153, Arg156, Arg159, and Arg162 each contribute to the ATP site. Arg110, Asp153, Arg156, Arg159, and Arg162 together coordinate CTP.

This sequence belongs to the tRNA nucleotidyltransferase/poly(A) polymerase family. Bacterial CCA-adding enzyme type 3 subfamily. Homodimer. Mg(2+) serves as cofactor.

It carries out the reaction a tRNA precursor + 2 CTP + ATP = a tRNA with a 3' CCA end + 3 diphosphate. It catalyses the reaction a tRNA with a 3' CCA end + 2 CTP + ATP = a tRNA with a 3' CCACCA end + 3 diphosphate. Catalyzes the addition and repair of the essential 3'-terminal CCA sequence in tRNAs without using a nucleic acid template. Adds these three nucleotides in the order of C, C, and A to the tRNA nucleotide-73, using CTP and ATP as substrates and producing inorganic pyrophosphate. tRNA 3'-terminal CCA addition is required both for tRNA processing and repair. Also involved in tRNA surveillance by mediating tandem CCA addition to generate a CCACCA at the 3' terminus of unstable tRNAs. While stable tRNAs receive only 3'-terminal CCA, unstable tRNAs are marked with CCACCA and rapidly degraded. This chain is CCA-adding enzyme, found in Bacillus cereus (strain Q1).